The following is a 219-amino-acid chain: C-8 sterol isomerase erg2 (219 aa).

The chain crosses the membrane as a helical span at residues 1 to 21 (MKLTKFLTVFIPFIAGLIYYI).

This sequence belongs to the ERG2 family.

The protein resides in the endoplasmic reticulum membrane. The enzyme catalyses fecosterol = episterol. It participates in steroid metabolism; ergosterol biosynthesis. C-8 sterol isomerase; part of the third module of ergosterol biosynthesis pathway that includes by the late steps of the pathway. Erg2 catalyzes the reaction which results in unsaturation at C-7 in the B ring of sterols and thus converts fecosterol to episterol. The third module or late pathway involves the ergosterol synthesis itself through consecutive reactions that mainly occur in the endoplasmic reticulum (ER) membrane. Firstly, the squalene synthase erg9 catalyzes the condensation of 2 farnesyl pyrophosphate moieties to form squalene, which is the precursor of all steroids. Secondly, squalene is converted into lanosterol by the consecutive action of the squalene epoxidase erg1 and the lanosterol synthase erg7. The lanosterol 14-alpha-demethylase erg11/cyp1 catalyzes C14-demethylation of lanosterol to produce 4,4'-dimethyl cholesta-8,14,24-triene-3-beta-ol. In the next steps, a complex process involving various demethylation, reduction and desaturation reactions catalyzed by the C-14 reductase erg24 and the C-4 demethylation complex erg25-erg26-erg27 leads to the production of zymosterol. Erg28 likely functions in the C-4 demethylation complex reaction by tethering erg26 and Erg27 to the endoplasmic reticulum or to facilitate interaction between these proteins. Then, the sterol 24-C-methyltransferase erg6 catalyzes the methyl transfer from S-adenosyl-methionine to the C-24 of zymosterol to form fecosterol. The C-8 sterol isomerase erg2 catalyzes the reaction which results in unsaturation at C-7 in the B ring of sterols and thus converts fecosterol to episterol. The sterol-C5-desaturases erg31 and erg32 then catalyze the introduction of a C-5 double bond in the B ring to produce 5-dehydroepisterol. The C-22 sterol desaturase erg5 further converts 5-dehydroepisterol into ergosta-5,7,22,24(28)-tetraen-3beta-ol by forming the C-22(23) double bond in the sterol side chain. Finally, ergosta-5,7,22,24(28)-tetraen-3beta-ol is substrate of the C-24(28) sterol reductase erg4 to produce ergosterol. In the genus Schizosaccharomyces, a second route exists between lanosterol and fecosterol, via the methylation of lanosterol to eburicol by erg6, followed by C14-demethylation by erg11/cyp1 and C4-demethylation by the demethylation complex erg25-erg26-erg27. This Schizosaccharomyces pombe (strain 972 / ATCC 24843) (Fission yeast) protein is C-8 sterol isomerase erg2.